Consider the following 445-residue polypeptide: MSNRKYFGTDGIRGKVGDSPITPDFVLKLGWAAGKVLARHGSRKIIIGKDTRISGYMLESSLEAGLAAAGLSASFTGPMPTPAVAYLTRTFRAEAGIVISASHNPYYDNGIKFFSIDGTKLPDDVEEAIEAEMEKPLTCVESAELGRANRIVDAAGRYIEFCKGTFPSEQSLNGLKIVLDCANGATYHIAPNVLRELGADVVTIGCEPNGININEKCGATDVRLLQQRVVEEKADVGLAFDGDGDRVIMVDHLGQKVDGDQILYIIAREALRQGQLRGGVVGTLMSNMGLELALKQLGIPFLRAKVGDRYVLEKLQEEGWRLGAENSGHVILLDKTTTGDGIVAGLQILSAMVRNHMSLHDLCSGMKLLPQVLVNVRFSGSHDPLKSENVINITKSVETELNGRGRVLLRKSGTEPLIRVMVEGEDDVQVTALAHRIADAVKHAG.

Serine 102 serves as the catalytic Phosphoserine intermediate. Serine 102, aspartate 241, aspartate 243, and aspartate 245 together coordinate Mg(2+). Phosphoserine is present on serine 102.

This sequence belongs to the phosphohexose mutase family. Requires Mg(2+) as cofactor. In terms of processing, activated by phosphorylation.

It carries out the reaction alpha-D-glucosamine 1-phosphate = D-glucosamine 6-phosphate. Functionally, catalyzes the conversion of glucosamine-6-phosphate to glucosamine-1-phosphate. The chain is Phosphoglucosamine mutase from Photorhabdus laumondii subsp. laumondii (strain DSM 15139 / CIP 105565 / TT01) (Photorhabdus luminescens subsp. laumondii).